The chain runs to 117 residues: Ribonuclease P protein component (117 aa).

It belongs to the RnpA family. As to quaternary structure, consists of a catalytic RNA component (M1 or rnpB) and a protein subunit.

The catalysed reaction is Endonucleolytic cleavage of RNA, removing 5'-extranucleotides from tRNA precursor.. In terms of biological role, RNaseP catalyzes the removal of the 5'-leader sequence from pre-tRNA to produce the mature 5'-terminus. It can also cleave other RNA substrates such as 4.5S RNA. The protein component plays an auxiliary but essential role in vivo by binding to the 5'-leader sequence and broadening the substrate specificity of the ribozyme. The sequence is that of Ribonuclease P protein component from Lactococcus lactis subsp. cremoris (strain MG1363).